A 128-amino-acid polypeptide reads, in one-letter code: Cytochrome c' (128 aa).

Residues Gln13, Gln17, Glu69, Thr70, Cys118, Cys121, and His122 each contribute to the heme c site.

Binds 1 heme c group covalently per subunit.

In terms of biological role, cytochrome c' is the most widely occurring bacterial c-type cytochrome. Cytochromes c' are high-spin proteins and the heme has no sixth ligand. Their exact function is not known. This is Cytochrome c' from Magnetospirillum fulvum (Rhodospirillum fulvum).